Reading from the N-terminus, the 320-residue chain is o-succinylbenzoate synthase (320 aa).

Residue Lys133 is the Proton donor of the active site. Mg(2+)-binding residues include Asp161, Glu190, and Asp213. Lys235 (proton acceptor) is an active-site residue.

This sequence belongs to the mandelate racemase/muconate lactonizing enzyme family. MenC type 1 subfamily. The cofactor is a divalent metal cation.

It carries out the reaction (1R,6R)-6-hydroxy-2-succinyl-cyclohexa-2,4-diene-1-carboxylate = 2-succinylbenzoate + H2O. It participates in quinol/quinone metabolism; 1,4-dihydroxy-2-naphthoate biosynthesis; 1,4-dihydroxy-2-naphthoate from chorismate: step 4/7. Its pathway is quinol/quinone metabolism; menaquinone biosynthesis. In terms of biological role, converts 2-succinyl-6-hydroxy-2,4-cyclohexadiene-1-carboxylate (SHCHC) to 2-succinylbenzoate (OSB). The protein is o-succinylbenzoate synthase of Shigella boydii serotype 4 (strain Sb227).